A 369-amino-acid chain; its full sequence is Cellular tumor antigen p53 (369 aa).

Residues Met1 to Ile28 are transcription activation (acidic). Residues Asp66–Asp256 mediate DNA binding. Zn(2+)-binding residues include Cys140, His143, Cys202, and Cys206. The interaction with DNA stretch occupies residues Arg237–Arg244. The segment covering Arg246–Asp263 has biased composition (basic and acidic residues). Disordered regions lie at residues Arg246–Ser296 and Asn318–Asp369. A compositionally biased stretch (polar residues) spans Asn269 to Val281. A Bipartite nuclear localization signal motif is present at residues Lys270–Lys289. An oligomerization region spans residues Glu298 to Pro329. Positions Glu312 to Leu323 match the Nuclear export signal motif. Residues Lys342–Lys365 are basic (repression of DNA-binding). Over residues Lys346–Asp369 the composition is skewed to basic and acidic residues.

Belongs to the p53 family. As to quaternary structure, binds DNA as a homotetramer. Requires Zn(2+) as cofactor.

It is found in the cytoplasm. The protein localises to the nucleus. Functionally, multifunctional transcription factor that induces cell cycle arrest, DNA repair or apoptosis upon binding to its target DNA sequence. Acts as a tumor suppressor in many tumor types; induces growth arrest or apoptosis depending on the physiological circumstances and cell type. Negatively regulates cell division by controlling expression of a set of genes required for this process. One of the activated genes is an inhibitor of cyclin-dependent kinases. Apoptosis induction seems to be mediated either by stimulation of BAX and FAS antigen expression, or by repression of Bcl-2 expression. This is Cellular tumor antigen p53 (tp53) from Barbus barbus (Barbel).